We begin with the raw amino-acid sequence, 826 residues long: DNA mismatch repair protein MutS (826 aa).

An ATP-binding site is contributed by 622–629; the sequence is GPNMAGKS.

Belongs to the DNA mismatch repair MutS family.

In terms of biological role, this protein is involved in the repair of mismatches in DNA. It is possible that it carries out the mismatch recognition step. This protein has a weak ATPase activity. The protein is DNA mismatch repair protein MutS of Chlamydia abortus (strain DSM 27085 / S26/3) (Chlamydophila abortus).